We begin with the raw amino-acid sequence, 195 residues long: dCTP deaminase, dUMP-forming (195 aa).

Residues 105-110 (RSSLGR), Asp-123, 131-133 (TLE), Gln-152, Tyr-166, Lys-173, and Gln-177 contribute to the dCTP site. Catalysis depends on Glu-133, which acts as the Proton donor/acceptor. Residues 161 to 195 (PADRPYGDERGSKYQDQDGPQASRIRGDREFGGTQ) are disordered. Basic and acidic residues predominate over residues 165–176 (PYGDERGSKYQD). Residues 185–195 (IRGDREFGGTQ) are compositionally biased toward basic and acidic residues.

This sequence belongs to the dCTP deaminase family. As to quaternary structure, homotrimer.

The enzyme catalyses dCTP + 2 H2O = dUMP + NH4(+) + diphosphate. The protein operates within pyrimidine metabolism; dUMP biosynthesis; dUMP from dCTP: step 1/1. Bifunctional enzyme that catalyzes both the deamination of dCTP to dUTP and the hydrolysis of dUTP to dUMP without releasing the toxic dUTP intermediate. In Halobacterium salinarum (strain ATCC 700922 / JCM 11081 / NRC-1) (Halobacterium halobium), this protein is dCTP deaminase, dUMP-forming.